The following is an 856-amino-acid chain: V-type proton ATPase subunit a (856 aa).

Over 1–409 (MAPKQDTPFR…NAYGTATYQE (409 aa)) the chain is Cytoplasmic. The chain crosses the membrane as a helical span at residues 410 to 428 (VNPAIPVIVTFPFLFAVMF). The Vacuolar portion of the chain corresponds to 429–430 (GD). Residues 431–447 (FGHALIMLCAALAMIYW) form a helical membrane-spanning segment. The Cytoplasmic portion of the chain corresponds to 448-460 (EKPLKKVTFELFA). A helical transmembrane segment spans residues 461 to 490 (MVFYGRYIVLVMAVFSVYTGLIYNDVFSKS). Over 491 to 544 (MTLFDSQWKWVVPENFKEGMTVKAVLREPNGYRYPFGLDWRWHGTENELLFINS) the chain is Vacuolar. Residues 545 to 564 (YKMKMAIILGWAHMTYSLCF) traverse the membrane as a helical segment. Over 565-582 (SYINARHFKRPIDIWGNF) the chain is Cytoplasmic. A helical membrane pass occupies residues 583–603 (VPGMIFFQSIFGYLVLCIIYK). Over 604–648 (WSVDWFGTGRQPPGLLNMLIYMFLQPGTLDGGVELYPGQATVQVI) the chain is Vacuolar. The helical transmembrane segment at 649–668 (LLLLAVIQVPILLFLKPFYL) threads the bilayer. Residues 669–738 (RWENNRARAK…EVMIHQVIHT (70 aa)) are Cytoplasmic-facing. The interval 689-710 (VSALDEDDEEDPSNGDDYEGAA) is disordered. A compositionally biased stretch (acidic residues) spans 692 to 707 (LDEDDEEDPSNGDDYE). A helical membrane pass occupies residues 739 to 763 (IEFCLNSVSHTASYLRLWALSLAHQ). Residues 764 to 784 (QLSAVLWSMTMAKALESKGLG) lie on the Vacuolar side of the membrane. A helical membrane pass occupies residues 785-823 (GAIFLVVAFAMFFVLSVIILIIMEGVSAMLHSLRLAWVE). Over 824-856 (SFSKFAEFGGWPFTPFSFKQQLEESEELKEYIG) the chain is Cytoplasmic.

Belongs to the V-ATPase 116 kDa subunit family. V-ATPase is a heteromultimeric enzyme composed of a peripheral catalytic V1 complex (components A to H) attached to an integral membrane V0 proton pore complex (components: a, c, c', c'', d, e, f and VOA1).

It is found in the vacuole membrane. Subunit of the V0 complex of vacuolar(H+)-ATPase (V-ATPase), a multisubunit enzyme composed of a peripheral complex (V1) that hydrolyzes ATP and a membrane integral complex (V0) that translocates protons. V-ATPase is responsible for acidifying and maintaining the pH of intracellular compartments. This chain is V-type proton ATPase subunit a (vph-1), found in Neurospora crassa (strain ATCC 24698 / 74-OR23-1A / CBS 708.71 / DSM 1257 / FGSC 987).